Consider the following 203-residue polypeptide: DNA-directed RNA polymerase subunit gamma (203 aa).

Zn(2+) contacts are provided by cysteine 34, cysteine 36, cysteine 49, and cysteine 52.

Belongs to the RNA polymerase beta' chain family. RpoC1 subfamily. In terms of assembly, in cyanobacteria the RNAP catalytic core is composed of 2 alpha, 1 beta, 1 beta', 1 gamma and 1 omega subunit. When a sigma factor is associated with the core the holoenzyme is formed, which can initiate transcription. The cofactor is Zn(2+).

It carries out the reaction RNA(n) + a ribonucleoside 5'-triphosphate = RNA(n+1) + diphosphate. Functionally, DNA-dependent RNA polymerase catalyzes the transcription of DNA into RNA using the four ribonucleoside triphosphates as substrates. The chain is DNA-directed RNA polymerase subunit gamma (rpoC1) from Prochlorothrix hollandica.